The sequence spans 138 residues: MKGGESKAEATSTDQRLKTRGRKAGKKTKKDPNQPKRPPSAFFVFLEDFRKEFNLANPNNKSVATVGKAAGARWKAMTDEDKAPYVAKAESRKTEYIKNVQQYNLKLASGTNREEDDSDKSKSEVDEAVSEEEAEDDD.

Disordered regions lie at residues 1-41 (MKGG…PPSA) and 105-138 (LKLA…EDDD). Residues 18–29 (KTRGRKAGKKTK) show a composition bias toward basic residues. Positions 35 to 104 (PKRPPSAFFV…EYIKNVQQYN (70 aa)) form a DNA-binding region, HMG box. A phosphoserine mark is found at Ser-123 and Ser-130. A compositionally biased stretch (acidic residues) spans 126–138 (DEAVSEEEAEDDD).

Belongs to the HMGB family. As to expression, mostly expressed roots and flowers, and, to a lower extent, in stems and leaves.

The protein resides in the nucleus. The protein localises to the cytoplasm. Its subcellular location is the cytosol. Its function is as follows. Binds preferentially double-stranded DNA. This chain is High mobility group B protein 4 (HMGB4), found in Arabidopsis thaliana (Mouse-ear cress).